Reading from the N-terminus, the 278-residue chain is Envelope glycoprotein L (278 aa).

Residues 1 to 30 (MCRRPDCGFSFSPGPVILLWCCLLLPIVSS) form the signal peptide. The gL betaherpesvirus-type domain maps to 43–256 (VPAECPELTR…DKYYAGLPPE (214 aa)). Cys-154 and Cys-159 are disulfide-bonded.

This sequence belongs to the herpesviridae glycoprotein L (gL) family. Betaherpesvirinae gL subfamily. Interacts with glycoprotein H (gH); this interaction is necessary for the correct processing and cell surface expression of gH. Forms the envelope pentamer complex (PC) composed of gH, gL, UL128, UL130, and UL131A. The pentamer interacts with host NRP2. Forms the envelope trimer complex composed of gH, gL, and gO. The trimer interacts with host PDGFRA. The trimer also interacts with host EPHA2.

It localises to the virion membrane. The protein localises to the host cell membrane. The protein resides in the host Golgi apparatus. It is found in the host trans-Golgi network. Functionally, the heterodimer glycoprotein H-glycoprotein L is required for the fusion of viral and plasma membranes leading to virus entry into the host cell. Acts as a functional inhibitor of gH and maintains gH in an inhibited form. Upon binding to host integrins, gL dissociates from gH leading to activation of the viral fusion glycoproteins gB and gH. In human cytomegalovirus, forms two distincts complexes to mediate viral entry, a trimer and a pentamer at the surface of the virion envelope. The gH-gL-gO trimer is required for infection in fibroblasts by interacting with host PDGFRA, and in glioblastoma cells by interacting with host EPHA2. The gH-gL-UL128-UL130-UL131A pentamer is essential for viral entry in epithelial, endothelial and myeloid cells via interaction with host NRP2. The polypeptide is Envelope glycoprotein L (Human cytomegalovirus (strain 5035) (HHV-5)).